The sequence spans 408 residues: E3 ubiquitin-protein ligase IE2 (408 aa).

Polar residues predominate over residues 1 to 10; the sequence is MSRQINAATP. Disordered stretches follow at residues 1–67 and 176–199; these read MSRQ…ENVQ and QSPD…QSEP. Basic residues predominate over residues 13–25; that stretch reads SRRHRLSLSRRRI. Residues 30–47 show a composition bias toward low complexity; it reads SPEAQPSSSSRSQPSSSS. 4 repeat units span residues 34-41, 42-49, 51-54, and 55-58. The tract at residues 34 to 49 is 2 X 8 AA tandem repeats of Q-P-S-S-S-S-R-S; the sequence is QPSSSSRSQPSSSSRS. Positions 51-58 are 2 X 4 AA tandem repeats of R-R-Q-E; sequence RRQERRQE. The segment covering 183–197 has biased composition (low complexity); that stretch reads SPQSPQPQQQQQQQS. An RING-type zinc finger spans residues 207-255; sequence CNICFTTFKDTKNVNSSFVTSIHCNHAVCFKCYVKIIMDNSVYKCFCSA.

Belongs to the alphabaculovirus IE2 protein family. As to quaternary structure, homooligomer. Post-translationally, auto-ubiquitinated.

It localises to the host nucleus. It carries out the reaction S-ubiquitinyl-[E2 ubiquitin-conjugating enzyme]-L-cysteine + [acceptor protein]-L-lysine = [E2 ubiquitin-conjugating enzyme]-L-cysteine + N(6)-ubiquitinyl-[acceptor protein]-L-lysine.. Functionally, RING-finger E3 ubiquitin ligase that plays an important regulatory role during the initial stages of infection. Migrates to specific nuclear foci early in infection supposely to prepare the sites for viral transcription and replication by targeting and ubiquitinating host proteins. Acts as a transcriptional activator and activates a number of viral promoters including itself, IE1 and the promoter of 39K gene. The protein is E3 ubiquitin-protein ligase IE2 (IE2) of Lepidoptera (butterflies and moths).